A 55-amino-acid chain; its full sequence is Large ribosomal subunit protein bL33 (55 aa).

Belongs to the bacterial ribosomal protein bL33 family.

This chain is Large ribosomal subunit protein bL33, found in Renibacterium salmoninarum (strain ATCC 33209 / DSM 20767 / JCM 11484 / NBRC 15589 / NCIMB 2235).